Here is a 355-residue protein sequence, read N- to C-terminus: Cytoplasmic tRNA 2-thiolation protein 1 (355 aa).

The tract at residues 320–341 (GIGRPRGVNGDHNKETKKPGSV) is disordered. The segment covering 328 to 337 (NGDHNKETKK) has biased composition (basic and acidic residues).

This sequence belongs to the TtcA family. CTU1/NCS6/ATPBD3 subfamily.

Its subcellular location is the cytoplasm. The protein operates within tRNA modification; 5-methoxycarbonylmethyl-2-thiouridine-tRNA biosynthesis. Functionally, plays a central role in 2-thiolation of mcm(5)S(2)U at tRNA wobble positions of tRNA(Lys), tRNA(Glu) and tRNA(Gln). Directly binds tRNAs and probably acts by catalyzing adenylation of tRNAs, an intermediate required for 2-thiolation. It is unclear whether it acts as a sulfurtransferase that transfers sulfur from thiocarboxylated URM1 onto the uridine of tRNAs at wobble position. This Arabidopsis thaliana (Mouse-ear cress) protein is Cytoplasmic tRNA 2-thiolation protein 1.